A 101-amino-acid chain; its full sequence is Integration host factor subunit alpha (101 aa).

Residues 49-70 are disordered; that stretch reads FGNFQLRDKPQRPGRNPKTGEE.

The protein belongs to the bacterial histone-like protein family. Heterodimer of an alpha and a beta chain.

This protein is one of the two subunits of integration host factor, a specific DNA-binding protein that functions in genetic recombination as well as in transcriptional and translational control. The protein is Integration host factor subunit alpha of Nitrosospira multiformis (strain ATCC 25196 / NCIMB 11849 / C 71).